Reading from the N-terminus, the 103-residue chain is Small ribosomal subunit protein bS6c (103 aa).

The protein belongs to the bacterial ribosomal protein bS6 family.

The protein localises to the plastid. The protein resides in the chloroplast. Its function is as follows. Binds together with bS18 to 16S ribosomal RNA. The chain is Small ribosomal subunit protein bS6c from Thalassiosira pseudonana (Marine diatom).